A 237-amino-acid chain; its full sequence is Ribonuclease PH (237 aa).

Phosphate-binding positions include Arg-86 and 124-126; that span reads GTR.

The protein belongs to the RNase PH family. Homohexameric ring arranged as a trimer of dimers.

It catalyses the reaction tRNA(n+1) + phosphate = tRNA(n) + a ribonucleoside 5'-diphosphate. Functionally, phosphorolytic 3'-5' exoribonuclease that plays an important role in tRNA 3'-end maturation. Removes nucleotide residues following the 3'-CCA terminus of tRNAs; can also add nucleotides to the ends of RNA molecules by using nucleoside diphosphates as substrates, but this may not be physiologically important. Probably plays a role in initiation of 16S rRNA degradation (leading to ribosome degradation) during starvation. The chain is Ribonuclease PH from Bradyrhizobium sp. (strain ORS 278).